Consider the following 210-residue polypeptide: Imidazoleglycerol-phosphate dehydratase (210 aa).

Residues 1 to 23 (MNDSLLSNGHAPPLRQATVDRQT) form a disordered region.

Belongs to the imidazoleglycerol-phosphate dehydratase family.

It localises to the cytoplasm. The catalysed reaction is D-erythro-1-(imidazol-4-yl)glycerol 3-phosphate = 3-(imidazol-4-yl)-2-oxopropyl phosphate + H2O. It functions in the pathway amino-acid biosynthesis; L-histidine biosynthesis; L-histidine from 5-phospho-alpha-D-ribose 1-diphosphate: step 6/9. This Thermosynechococcus vestitus (strain NIES-2133 / IAM M-273 / BP-1) protein is Imidazoleglycerol-phosphate dehydratase.